The chain runs to 188 residues: Holliday junction branch migration complex subunit RuvA (188 aa).

The interval 1–64 is domain I; sequence MIAGISGRVL…QDGITLYGFS (64 aa). The domain II stretch occupies residues 65–143; the sequence is NEMKKELFLS…SAGIKDMRIY (79 aa). Residue Tyr-143 is a region of interest, flexible linker. A domain III region spans residues 143 to 186; the sequence is YHESLEALVSLGYPEKQAREAVKQVYREGMKTSELIKEALKFLS.

It belongs to the RuvA family. As to quaternary structure, homotetramer. Forms an RuvA(8)-RuvB(12)-Holliday junction (HJ) complex. HJ DNA is sandwiched between 2 RuvA tetramers; dsDNA enters through RuvA and exits via RuvB. An RuvB hexamer assembles on each DNA strand where it exits the tetramer. Each RuvB hexamer is contacted by two RuvA subunits (via domain III) on 2 adjacent RuvB subunits; this complex drives branch migration. In the full resolvosome a probable DNA-RuvA(4)-RuvB(12)-RuvC(2) complex forms which resolves the HJ.

Its subcellular location is the cytoplasm. The RuvA-RuvB-RuvC complex processes Holliday junction (HJ) DNA during genetic recombination and DNA repair, while the RuvA-RuvB complex plays an important role in the rescue of blocked DNA replication forks via replication fork reversal (RFR). RuvA specifically binds to HJ cruciform DNA, conferring on it an open structure. The RuvB hexamer acts as an ATP-dependent pump, pulling dsDNA into and through the RuvAB complex. HJ branch migration allows RuvC to scan DNA until it finds its consensus sequence, where it cleaves and resolves the cruciform DNA. Promotes Holliday junction (HJ) branch migration in conjunction with RuvB. The protein is Holliday junction branch migration complex subunit RuvA of Thermotoga maritima (strain ATCC 43589 / DSM 3109 / JCM 10099 / NBRC 100826 / MSB8).